Consider the following 187-residue polypeptide: Elongation factor P (187 aa).

The protein belongs to the elongation factor P family.

The protein resides in the cytoplasm. Its pathway is protein biosynthesis; polypeptide chain elongation. Involved in peptide bond synthesis. Stimulates efficient translation and peptide-bond synthesis on native or reconstituted 70S ribosomes in vitro. Probably functions indirectly by altering the affinity of the ribosome for aminoacyl-tRNA, thus increasing their reactivity as acceptors for peptidyl transferase. The polypeptide is Elongation factor P (Thermodesulfovibrio yellowstonii (strain ATCC 51303 / DSM 11347 / YP87)).